The following is a 96-amino-acid chain: Putative antiholin (96 aa).

The Periplasmic segment spans residues 1–4 (MIEM). 2 consecutive stretches face the cytoplasmic side: residues 1–32 (MIEM…KKTE) and 26–29 (QAIK). Residues 5–25 (EFGKELLVYMTFLVVVTPVFV) traverse the membrane as a helical segment. Residues 33-55 (LVPSKWLPTVSILIGAILGALAT) traverse the membrane as a helical segment. Over 56-60 (FLDGS) the chain is Periplasmic. Residues 61–81 (GSLATMIWAGALAGAGGTGLF) traverse the membrane as a helical segment. At 82–96 (EQFTNRSKKYGEDDK) the chain is on the cytoplasmic side.

In terms of assembly, homomultimer. Interacts with isoform Antiholin; this interaction blocks the holin homomultimerization and delays host cell lysis.

It localises to the host cell inner membrane. In terms of biological role, accumulates harmlessly in the cytoplasmic membrane until it reaches a critical concentration that triggers the formation of micron-scale pores (holes) causing host cell membrane disruption and endolysin escape into the periplasmic space. Determines the precise timing of host cell lysis. Participates with the endolysin and spanin proteins in the sequential events which lead to the programmed host cell lysis releasing the mature viral particles from the host cell. Isoform Antiholin: Counteracts the aggregation of the holin molecules and thus of pore formation. This Listeria monocytogenes (Bacteriophage A118) protein is Putative antiholin (hol).